Reading from the N-terminus, the 455-residue chain is Ribulose bisphosphate carboxylase large chain (455 aa).

N6,N6,N6-trimethyllysine is present on Lys5. Asn114 and Thr164 together coordinate substrate. Lys166 (proton acceptor) is an active-site residue. Lys168 lines the substrate pocket. Mg(2+) is bound by residues Lys192, Asp194, and Glu195. The residue at position 192 (Lys192) is an N6-carboxylysine. His285 acts as the Proton acceptor in catalysis. The substrate site is built by Arg286, His318, and Ser370.

This sequence belongs to the RuBisCO large chain family. Type I subfamily. In terms of assembly, heterohexadecamer of 8 large chains and 8 small chains; disulfide-linked. The disulfide link is formed within the large subunit homodimers. Requires Mg(2+) as cofactor. The disulfide bond which can form in the large chain dimeric partners within the hexadecamer appears to be associated with oxidative stress and protein turnover.

It is found in the plastid. The protein localises to the chloroplast. It catalyses the reaction 2 (2R)-3-phosphoglycerate + 2 H(+) = D-ribulose 1,5-bisphosphate + CO2 + H2O. The enzyme catalyses D-ribulose 1,5-bisphosphate + O2 = 2-phosphoglycolate + (2R)-3-phosphoglycerate + 2 H(+). In terms of biological role, ruBisCO catalyzes two reactions: the carboxylation of D-ribulose 1,5-bisphosphate, the primary event in carbon dioxide fixation, as well as the oxidative fragmentation of the pentose substrate in the photorespiration process. Both reactions occur simultaneously and in competition at the same active site. This chain is Ribulose bisphosphate carboxylase large chain, found in Lupinus arcticus (Arctic lupine).